The sequence spans 534 residues: MTKYIFVTGGVVSSIGKGIVAASLGRLLKNRGLKVTIQKFDPYINIDPGTMSPYQHGEVYVTDDGAETDLDLGHYERFIDINLNKYSNVTTGKIYSEVLRKERKGEYLGATVQVIPHITDALKEKIKRAASTTDSDVIITEVGGTVGDIESLPFLEALRQMKADVGSENVMYIHTTLLPYLKAAGEMKTKPTQHSVKELRGLGIQPNMLVIRTEEPVEQGIKNKLAQFCDVNSEAVIESRDVEHLYQIPLNLQAQSMDQIVCDHLKLNAPQADMTEWSAMVDKVMNLRKTTKIALVGKYVELPDAYLSVVEALKHSGYANDTAIDLKWVNANDVTVENAADLLGDADGIIVPGGFGQRGTEGKIQAIRYARENDVPMLGICLGMQLTCVEFARHVLNMEGANSFELEPSTKYPIIDIMRDQIDIEDMGGTLRLGLYPCKLKPGSKAAMAYNNQEVVQRRHRHRYEFNNKFRSEFEAAGFVFSGVSPDNRLVEIVELKEKKFFVAAQYHPELQSRPNRPEELYTAFVTAAIKNSN.

The amidoligase domain stretch occupies residues Met1 to Leu267. Ser13 is a binding site for CTP. Ser13 lines the UTP pocket. Ser14 to Ile19 is a binding site for ATP. Tyr54 is a binding site for L-glutamine. Asp71 is an ATP binding site. Asp71 and Glu141 together coordinate Mg(2+). Residues Asp148 to Glu150, Lys188 to Gln193, and Lys224 each bind CTP. UTP-binding positions include Lys188–Gln193 and Lys224. Arg240 to Val242 serves as a coordination point for ATP. One can recognise a Glutamine amidotransferase type-1 domain in the interval Lys292–Asn534. Gly354 serves as a coordination point for L-glutamine. The active-site Nucleophile; for glutamine hydrolysis is the Cys381. L-glutamine is bound by residues Leu382–Gln385, Glu405, and Arg463. Residues His508 and Glu510 contribute to the active site.

It belongs to the CTP synthase family. In terms of assembly, homotetramer.

It catalyses the reaction UTP + L-glutamine + ATP + H2O = CTP + L-glutamate + ADP + phosphate + 2 H(+). The enzyme catalyses L-glutamine + H2O = L-glutamate + NH4(+). The catalysed reaction is UTP + NH4(+) + ATP = CTP + ADP + phosphate + 2 H(+). It participates in pyrimidine metabolism; CTP biosynthesis via de novo pathway; CTP from UDP: step 2/2. Allosterically activated by GTP, when glutamine is the substrate; GTP has no effect on the reaction when ammonia is the substrate. The allosteric effector GTP functions by stabilizing the protein conformation that binds the tetrahedral intermediate(s) formed during glutamine hydrolysis. Inhibited by the product CTP, via allosteric rather than competitive inhibition. Catalyzes the ATP-dependent amination of UTP to CTP with either L-glutamine or ammonia as the source of nitrogen. Regulates intracellular CTP levels through interactions with the four ribonucleotide triphosphates. The protein is CTP synthase of Streptococcus pyogenes serotype M18 (strain MGAS8232).